Here is a 965-residue protein sequence, read N- to C-terminus: Aminopeptidase N (965 aa).

Residues 1–8 (MAKGFYIS) are Cytoplasmic-facing. Residues 9–32 (KALGILAILLGVAAVATIIALSVV) traverse the membrane as a helical; Signal-anchor for type II membrane protein segment. The segment at 33 to 65 (YAQEKNKNAERGTAAPTSPTGPTTTSATTLDQS) is cytosolic Ser/Thr-rich junction. The Extracellular portion of the chain corresponds to 33 to 965 (YAQEKNKNAE…VVLNWFKDHS (933 aa)). A disordered region spans residues 40–65 (NAERGTAAPTSPTGPTTTSATTLDQS). The segment covering 44–61 (GTAAPTSPTGPTTTSATT) has biased composition (low complexity). Residues 66 to 965 (KPWNRYRLPT…VVLNWFKDHS (900 aa)) are metalloprotease. N-linked (GlcNAc...) asparagine glycosylation occurs at N125. Y173 is modified (sulfotyrosine). Residues N231, N260, and N316 are each glycosylated (N-linked (GlcNAc...) asparagine). Residue 349-353 (GAMEN) coordinates substrate. H385 is a Zn(2+) binding site. The Proton acceptor role is filled by E386. 2 residues coordinate Zn(2+): H389 and E408. At Y416 the chain carries Sulfotyrosine. N508, N569, N624, N680, N734, and N738 each carry an N-linked (GlcNAc...) asparagine glycan. Cystine bridges form between C760–C767 and C797–C833.

Belongs to the peptidase M1 family. In terms of assembly, homodimer. Interacts with SLC6A19. It depends on Zn(2+) as a cofactor. Sulfated. In terms of processing, N- and O-glycosylated. Post-translationally, may undergo proteolysis and give rise to a soluble form.

It is found in the cell membrane. It carries out the reaction Release of an N-terminal amino acid, Xaa-|-Yaa- from a peptide, amide or arylamide. Xaa is preferably Ala, but may be most amino acids including Pro (slow action). When a terminal hydrophobic residue is followed by a prolyl residue, the two may be released as an intact Xaa-Pro dipeptide.. Broad specificity aminopeptidase which plays a role in the final digestion of peptides generated from hydrolysis of proteins by gastric and pancreatic proteases. Also involved in the processing of various peptides including peptide hormones, such as angiotensin III and IV, neuropeptides, and chemokines. May also be involved the cleavage of peptides bound to major histocompatibility complex class II molecules of antigen presenting cells. May have a role in angiogenesis and promote cholesterol crystallization. May have a role in amino acid transport by acting as binding partner of amino acid transporter SLC6A19 and regulating its activity. The sequence is that of Aminopeptidase N (ANPEP) from Bos taurus (Bovine).